The primary structure comprises 546 residues: Probable protein kinase UbiB (546 aa).

A Protein kinase domain is found at 124 to 502 (DFEIKPLASA…HVRQGQSRYF (379 aa)). ATP is bound by residues 130–138 (LASASIAQV) and lysine 153. Aspartate 288 serves as the catalytic Proton acceptor. Helical transmembrane passes span 501–521 (YFLGIGATLVLSGTFLLVSRP) and 522–542 (EWGLMPGWLMAGGLIAWFVGW).

It belongs to the ABC1 family. UbiB subfamily.

Its subcellular location is the cell inner membrane. It participates in cofactor biosynthesis; ubiquinone biosynthesis [regulation]. Functionally, is probably a protein kinase regulator of UbiI activity which is involved in aerobic coenzyme Q (ubiquinone) biosynthesis. The chain is Probable protein kinase UbiB from Escherichia coli O45:K1 (strain S88 / ExPEC).